The chain runs to 130 residues: Phosphomevalonate dehydratase small subunit (130 aa).

Ser-62 acts as the Proton acceptor in catalysis.

The protein belongs to the AcnX type II small subunit family. In terms of assembly, heterodimer composed of a large subunit (PMDh-L) and a small subunit (PMDh-S).

The catalysed reaction is (R)-5-phosphomevalonate = (2E)-3-methyl-5-phosphooxypent-2-enoate + H2O. Its pathway is isoprenoid biosynthesis; isopentenyl diphosphate biosynthesis via mevalonate pathway. Functionally, component of a hydro-lyase that catalyzes the dehydration of mevalonate 5-phosphate (MVA5P) to form trans-anhydromevalonate 5-phosphate (tAHMP). Involved in the archaeal mevalonate (MVA) pathway, which provides fundamental precursors for isoprenoid biosynthesis, such as isopentenyl diphosphate (IPP) and dimethylallyl diphosphate (DMAPP). This is Phosphomevalonate dehydratase small subunit from Pyrococcus abyssi (strain GE5 / Orsay).